The chain runs to 235 residues: uncharacterized protein (235 aa).

Disordered stretches follow at residues 1-47 (MSHK…QSTN) and 78-128 (QEHH…KQPQ). Residues 20–33 (HPPGQSLSSISWSP) show a composition bias toward polar residues. Low complexity predominate over residues 84–98 (QQQQQQRQNIRSQNS). Polar residues predominate over residues 106–128 (VQESQWTSSASNSSLKKQEKQPQ).

This is an uncharacterized protein from Saccharomyces cerevisiae (strain ATCC 204508 / S288c) (Baker's yeast).